The sequence spans 442 residues: 3-oxoacyl-[acyl-carrier-protein] synthase homolog (442 aa).

The Ketosynthase family 3 (KS3) domain occupies 2–438; it reads SRRVVITGLG…GVNTSLLFKK (437 aa). Active-site for beta-ketoacyl synthase activity residues include cysteine 187, histidine 322, and histidine 362.

This sequence belongs to the thiolase-like superfamily. Beta-ketoacyl-ACP synthases family.

The protein resides in the mitochondrion. It catalyses the reaction a fatty acyl-[ACP] + malonyl-[ACP] + H(+) = a 3-oxoacyl-[ACP] + holo-[ACP] + CO2. In terms of biological role, possibly involved in the synthesis of a specialized molecule, probably related to a fatty acid, which is essential for mitochondrial respiration. Is essential for oxygen uptake and the presence of cytochromes A and B. The protein is 3-oxoacyl-[acyl-carrier-protein] synthase homolog (CEM1) of Saccharomyces cerevisiae (strain ATCC 204508 / S288c) (Baker's yeast).